We begin with the raw amino-acid sequence, 2381 residues long: Nipped-B-like protein A (2381 aa).

The stretch at 85-124 (SDELEGDVPVLLQLLMSRNPNIFRNKTAPNTPQYPAQAGI) is one HEAT 1 repeat. Disordered regions lie at residues 131–211 (PPYK…HLQQ), 240–289 (HLLQ…DIVG), and 329–503 (LAAI…ELPP). The span at 138 to 158 (GSMQGSPASANYQQASMSHSP) shows a compositional bias: polar residues. Composition is skewed to basic and acidic residues over residues 254–273 (GTKD…KSSE) and 333–355 (ERME…DKDK). The span at 373–389 (GTAGSGSGAPGGGGGAN) shows a compositional bias: gly residues. Residues 451–473 (VKHEHDHDPEHPHYDDKQPDTPR) are compositionally biased toward basic and acidic residues. The PxVxL motif signature appears at 552–565 (KKSVKPVVVLQKLS). The span at 570–580 (QRLMRERDSRA) shows a compositional bias: basic and acidic residues. Disordered stretches follow at residues 570–604 (QRLM…SVLK) and 629–708 (RKRS…NEVA). Residues 581–592 (SKSGKNRLSSGR) show a composition bias toward polar residues. Composition is skewed to basic and acidic residues over residues 633–642 (TVNERPKYAE) and 658–694 (KDRD…RYDD). HEAT repeat units follow at residues 1299-1337 (SQSF…VDPS), 1375-1413 (PQLT…EQPN), 1477-1516 (YDWF…HILK), and 1843-1881 (LIHP…KYTG). 2 disordered regions span residues 2005–2095 (IPGR…DLDD) and 2228–2271 (LLGG…GDSA). Basic residues predominate over residues 2006 to 2021 (PGRKSRKRRRRRRRPQ). Positions 2040–2056 (EEERGAQDEERERHSGD) are enriched in basic and acidic residues. The segment covering 2057–2068 (EEYDDDDYEEDE) has biased composition (acidic residues). Positions 2077–2086 (KPTEDIRQSE) are enriched in basic and acidic residues.

The protein belongs to the SCC2/Nipped-B family.

The protein resides in the nucleus. Functionally, may play a structural role in chromatin. Involved in sister chromatid cohesion, possibly by facilitating the cohesin complex loading. Transcription factor, which may promote cortical neuron migration during brain development by regulating the transcription of crucial genes in this process. The sequence is that of Nipped-B-like protein A (nipbla) from Danio rerio (Zebrafish).